The sequence spans 518 residues: Glutamate--cysteine ligase (518 aa).

This sequence belongs to the glutamate--cysteine ligase type 1 family. Type 1 subfamily.

It catalyses the reaction L-cysteine + L-glutamate + ATP = gamma-L-glutamyl-L-cysteine + ADP + phosphate + H(+). It functions in the pathway sulfur metabolism; glutathione biosynthesis; glutathione from L-cysteine and L-glutamate: step 1/2. The sequence is that of Glutamate--cysteine ligase from Escherichia coli O127:H6 (strain E2348/69 / EPEC).